We begin with the raw amino-acid sequence, 369 residues long: Anhydro-N-acetylmuramic acid kinase (369 aa).

11–18 is an ATP binding site; it reads GTSMDAVD.

Belongs to the anhydro-N-acetylmuramic acid kinase family.

The catalysed reaction is 1,6-anhydro-N-acetyl-beta-muramate + ATP + H2O = N-acetyl-D-muramate 6-phosphate + ADP + H(+). It functions in the pathway amino-sugar metabolism; 1,6-anhydro-N-acetylmuramate degradation. Its pathway is cell wall biogenesis; peptidoglycan recycling. Its function is as follows. Catalyzes the specific phosphorylation of 1,6-anhydro-N-acetylmuramic acid (anhMurNAc) with the simultaneous cleavage of the 1,6-anhydro ring, generating MurNAc-6-P. Is required for the utilization of anhMurNAc either imported from the medium or derived from its own cell wall murein, and thus plays a role in cell wall recycling. The chain is Anhydro-N-acetylmuramic acid kinase from Idiomarina loihiensis (strain ATCC BAA-735 / DSM 15497 / L2-TR).